Consider the following 584-residue polypeptide: Negative regulator of RAS-cAMP pathway (584 aa).

The residue at position 25 (Thr-25) is a Phosphothreonine. Disordered stretches follow at residues 95–167 (PIKP…STTS), 209–279 (PLQS…SKTS), 291–320 (SEDE…DDYN), 343–366 (NLDS…HDPV), and 381–432 (SNSN…SLKT). Polar residues-rich tracts occupy residues 114–127 (PPTT…TRPM), 229–254 (CIDN…SFPQ), and 267–278 (NDQNGQLSLSKT). Residues Ser-247 and Ser-276 each carry the phosphoserine modification. Positions 307-320 (FYADEDDEEYDDYN) are enriched in acidic residues. Positions 343 to 363 (NLDSTKSSVSSANTINSNTSH) are enriched in polar residues. Over residues 381-392 (SNSNNHNTAHSE) the composition is skewed to low complexity. Residues 398–432 (VSPTPQSSHSNIGPQPQQNPPSANGIKQQKPSLKT) show a composition bias toward polar residues. Phosphoserine is present on Ser-442. Ser-518 is subject to Phosphoserine; by PKA. The segment at 551 to 584 (DNTSIANSNGNGNDDTSNQRTEALGRKTSNGGRI) is disordered. A compositionally biased stretch (low complexity) spans 557–568 (NSNGNGNDDTSN).

It is found in the nucleus. In terms of biological role, negative regulator of Ras-cAMP pathway. Involved in transcriptional regulation of galactose-inducible genes. This chain is Negative regulator of RAS-cAMP pathway (MKS1), found in Saccharomyces cerevisiae (strain ATCC 204508 / S288c) (Baker's yeast).